An 807-amino-acid polypeptide reads, in one-letter code: DNA gyrase subunit B (807 aa).

The region spanning 429–543 (SELFIVEGDS…KGYLYIAQPP (115 aa)) is the Toprim domain. Residues glutamate 435, aspartate 508, and aspartate 510 each contribute to the Mg(2+) site.

The protein belongs to the type II topoisomerase GyrB family. As to quaternary structure, heterotetramer, composed of two GyrA and two GyrB chains. In the heterotetramer, GyrA contains the active site tyrosine that forms a transient covalent intermediate with DNA, while GyrB binds cofactors and catalyzes ATP hydrolysis. Mg(2+) serves as cofactor. Mn(2+) is required as a cofactor. Requires Ca(2+) as cofactor.

It localises to the cytoplasm. It catalyses the reaction ATP-dependent breakage, passage and rejoining of double-stranded DNA.. In terms of biological role, a type II topoisomerase that negatively supercoils closed circular double-stranded (ds) DNA in an ATP-dependent manner to modulate DNA topology and maintain chromosomes in an underwound state. Negative supercoiling favors strand separation, and DNA replication, transcription, recombination and repair, all of which involve strand separation. Also able to catalyze the interconversion of other topological isomers of dsDNA rings, including catenanes and knotted rings. Type II topoisomerases break and join 2 DNA strands simultaneously in an ATP-dependent manner. The chain is DNA gyrase subunit B from Rickettsia conorii (strain ATCC VR-613 / Malish 7).